Consider the following 125-residue polypeptide: uncharacterized protein (125 aa).

Residues 1 to 21 form the signal peptide; the sequence is MIRNIIITISAILLLTSKGFA. A coiled-coil region spans residues 54–102; it reads KPEIREEIQKYRVEIVNINKKKRELYDKLSKEAQNFLAKEQEYKQRLSS. The tract at residues 96–125 is disordered; the sequence is YKQRLSSSSMATEDSKDNNTAKDNKDADKK. The segment covering 108-125 has biased composition (basic and acidic residues); it reads EDSKDNNTAKDNKDADKK.

This is an uncharacterized protein from Rickettsia bellii (strain RML369-C).